A 323-amino-acid polypeptide reads, in one-letter code: Beta-ketoacyl-[acyl-carrier-protein] synthase III (323 aa).

Residues Cys-113 and His-250 contribute to the active site. The interval 251–255 is ACP-binding; that stretch reads QANKR. Asn-280 is an active-site residue.

The protein belongs to the thiolase-like superfamily. FabH family. Homodimer.

It is found in the cytoplasm. The catalysed reaction is malonyl-[ACP] + acetyl-CoA + H(+) = 3-oxobutanoyl-[ACP] + CO2 + CoA. The protein operates within lipid metabolism; fatty acid biosynthesis. Catalyzes the condensation reaction of fatty acid synthesis by the addition to an acyl acceptor of two carbons from malonyl-ACP. Catalyzes the first condensation reaction which initiates fatty acid synthesis and may therefore play a role in governing the total rate of fatty acid production. Possesses both acetoacetyl-ACP synthase and acetyl transacylase activities. Its substrate specificity determines the biosynthesis of branched-chain and/or straight-chain of fatty acids. The protein is Beta-ketoacyl-[acyl-carrier-protein] synthase III of Brucella anthropi (strain ATCC 49188 / DSM 6882 / CCUG 24695 / JCM 21032 / LMG 3331 / NBRC 15819 / NCTC 12168 / Alc 37) (Ochrobactrum anthropi).